The primary structure comprises 465 residues: Serine/threonine-protein kinase 38 (465 aa).

An N-acetylalanine modification is found at A2. The tract at residues 62–87 is interaction with S100B; sequence KRLRRSAHARKETEFLRLKRTRLGLE. Phosphothreonine is present on T74. The region spanning 89 to 382 is the Protein kinase domain; it reads FESLKVIGRG…VEEIKNNSFF (294 aa). ATP is bound by residues 95 to 103 and K118; that span reads IGRGAFGEV. D212 serves as the catalytic Proton acceptor. S264 is modified (phosphoserine). S281 is subject to Phosphoserine; by autocatalysis. A UFM1-interacting motif (UFIM) motif is present at residues 306 to 311; it reads WSLGVI. The AGC-kinase C-terminal domain maps to 383 to 455; that stretch reads EGVDWEHIRE…KRFEGLTARG (73 aa). A Phosphothreonine; by STK24/MST3 modification is found at T444.

It belongs to the protein kinase superfamily. AGC Ser/Thr protein kinase family. In terms of assembly, homodimeric S100B binds two molecules of STK38. Interacts with MOB1 and MOB2. Interacts with MAP3K1 and MAP3K2 (via the kinase domain). Forms a tripartite complex with MOBKL1B and STK3/MST2. Interacts with MICAL1; leading to inhibit the protein kinase activity by antagonizing activation by MST1/STK4. The cofactor is Mg(2+). Post-translationally, ISGylated. Phosphorylated by STK3/MST2 and this is enhanced by MOBKL1B.

The protein localises to the nucleus. Its subcellular location is the cytoplasm. It is found in the chromosome. The catalysed reaction is L-seryl-[protein] + ATP = O-phospho-L-seryl-[protein] + ADP + H(+). It carries out the reaction L-threonyl-[protein] + ATP = O-phospho-L-threonyl-[protein] + ADP + H(+). Activated by binding of S100B which releases autoinhibitory N-lobe interactions, enabling ATP to bind and the autophosphorylation of Ser-281. Thr-444 then undergoes calcium-dependent phosphorylation by STK24/MST3. Interactions between phosphorylated Thr-444 and the N-lobe promote additional structural changes that complete the activation of the kinase. Autoinhibition is also released by the binding of MOB1/MOBKL1A and MOB2/HCCA2 to the N-terminal of STK38. Its function is as follows. Serine/threonine-protein kinase that acts as a negative regulator of MAP3K1/2 signaling. Converts MAP3K2 from its phosphorylated form to its non-phosphorylated form and inhibits autophosphorylation of MAP3K2. Acts as an ufmylation 'reader' in a kinase-independent manner: specifically recognizes and binds mono-ufmylated histone H4 in response to DNA damage, promoting the recruitment of SUV39H1 to the double-strand breaks, resulting in ATM activation. The sequence is that of Serine/threonine-protein kinase 38 (STK38) from Bos taurus (Bovine).